A 206-amino-acid polypeptide reads, in one-letter code: 3-isopropylmalate dehydratase small subunit (206 aa).

Belongs to the LeuD family. LeuD type 1 subfamily. As to quaternary structure, heterodimer of LeuC and LeuD.

The enzyme catalyses (2R,3S)-3-isopropylmalate = (2S)-2-isopropylmalate. It functions in the pathway amino-acid biosynthesis; L-leucine biosynthesis; L-leucine from 3-methyl-2-oxobutanoate: step 2/4. Its function is as follows. Catalyzes the isomerization between 2-isopropylmalate and 3-isopropylmalate, via the formation of 2-isopropylmaleate. The chain is 3-isopropylmalate dehydratase small subunit from Leptospira borgpetersenii serovar Hardjo-bovis (strain JB197).